A 134-amino-acid chain; its full sequence is Putative cytochrome c oxidase subunit 6b-like (134 aa).

Residues 1 to 61 form a disordered region; that stretch reads MSSAQMDPHD…DSGRETDAAV (61 aa). Composition is skewed to basic and acidic residues over residues 7-19 and 44-61; these read DPHD…DISK and ATFR…DAAV. The region spanning 71 to 114 is the CHCH domain; the sequence is TRHCFNRFMQYHKCIEKNGRDANDCNNLRDYVRSICPEELVSKI. A Cx9C motif motif is present at residues 74-84; it reads CFNRFMQYHKC. Cystine bridges form between C74–C106 and C84–C95. Positions 95–106 match the Cx10C motif motif; it reads CNNLRDYVRSIC.

The protein belongs to the cytochrome c oxidase subunit 6B (TC 3.D.4.8) family.

Its subcellular location is the mitochondrion. This protein is one of the nuclear-coded polypeptide chains of cytochrome c oxidase, the terminal oxidase in mitochondrial electron transport. This protein may be one of the heme-binding subunits of the oxidase. This Arabidopsis thaliana (Mouse-ear cress) protein is Putative cytochrome c oxidase subunit 6b-like.